The chain runs to 156 residues: DNA gyrase inhibitor (156 aa).

The protein belongs to the DNA gyrase inhibitor family. As to quaternary structure, interacts with DNA gyrase.

It is found in the cytoplasm. Inhibits the supercoiling activity of DNA gyrase. Acts by inhibiting DNA gyrase at an early step, prior to (or at the step of) binding of DNA by the gyrase. It protects cells against toxins that target DNA gyrase, by inhibiting activity of these toxins and reducing the formation of lethal double-strand breaks in the cell. This Serratia proteamaculans (strain 568) protein is DNA gyrase inhibitor.